Consider the following 68-residue polypeptide: MNPKLLIVIGLLLATGVCSFAKALDEESLRKECNHLNEPCDSDGDCCTSSEQCISTGSKYFCKGKQGP.

The first 23 residues, 1–23 (MNPKLLIVIGLLLATGVCSFAKA), serve as a signal peptide directing secretion. 3 disulfide bridges follow: Cys-33–Cys-47, Cys-40–Cys-53, and Cys-46–Cys-62.

Belongs to the scorpion calcin-like family. Expressed by the venom gland. In intravenously injected mice, the labeled toxin has preference for heart, liver and lungs.

The protein resides in the secreted. Its subcellular location is the nucleus. In terms of biological role, cell penetrating peptide (CPP) that increases intracellular calcium release through the activation of nuclear inositol 1,4,5-trisphosphate receptors (ITPR) of cardiomyocytes, thereby causing an increase in the contraction frequency of these cells. In vivo, this toxin is not lethal to mice, hovewer anti-CPP serum reduces venom lethality, suggesting that this toxin is lethal when it acts in synergy with other venom components. This is Intracellular calcium channel modulator CCP-Ts from Tityus serrulatus (Brazilian scorpion).